The sequence spans 428 residues: UDP-N-acetylglucosamine 1-carboxyvinyltransferase 2 (428 aa).

22 to 23 serves as a coordination point for phosphoenolpyruvate; sequence KN. R92 lines the UDP-N-acetyl-alpha-D-glucosamine pocket. Catalysis depends on C116, which acts as the Proton donor. C116 carries the post-translational modification 2-(S-cysteinyl)pyruvic acid O-phosphothioketal. UDP-N-acetyl-alpha-D-glucosamine-binding positions include 121-125, D304, and I326; that span reads RPIDQ.

It belongs to the EPSP synthase family. MurA subfamily.

The protein localises to the cytoplasm. The enzyme catalyses phosphoenolpyruvate + UDP-N-acetyl-alpha-D-glucosamine = UDP-N-acetyl-3-O-(1-carboxyvinyl)-alpha-D-glucosamine + phosphate. Its pathway is cell wall biogenesis; peptidoglycan biosynthesis. Its function is as follows. Cell wall formation. Adds enolpyruvyl to UDP-N-acetylglucosamine. The polypeptide is UDP-N-acetylglucosamine 1-carboxyvinyltransferase 2 (Geobacillus kaustophilus (strain HTA426)).